A 352-amino-acid chain; its full sequence is Beta-1,4-xylanase (352 aa).

A signal peptide spans 1-23 (MINQRFSILVLLLILLTFSLGFL). The region spanning 29–352 (GMEIPSLKEV…KKAFWEIVKF (324 aa)) is the GH10 domain. Catalysis depends on Glu-155, which acts as the Proton donor. Catalysis depends on Glu-262, which acts as the Nucleophile.

The protein belongs to the glycosyl hydrolase 10 (cellulase F) family.

It is found in the secreted. It carries out the reaction Endohydrolysis of (1-&gt;4)-beta-D-xylosidic linkages in xylans.. It participates in glycan degradation; xylan degradation. In Dictyoglomus thermophilum, this protein is Beta-1,4-xylanase (xynA).